We begin with the raw amino-acid sequence, 20 residues long: Collagenolytic protease 35 kDa 2 (20 aa).

Positions 1 to 20 (IVGGTEVTPGEIPYQLSFQD) constitute a Peptidase S1 domain. A disordered region spans residues 1–20 (IVGGTEVTPGEIPYQLSFQD).

This sequence belongs to the peptidase S1 family.

The catalysed reaction is Hydrolysis of proteins, with broad specificity for peptide bonds. Native collagen is cleaved about 75% of the length of the molecule from the N-terminus. Low activity on small molecule substrates of both trypsin and chymotrypsin.. In terms of biological role, this enzyme is a serine protease capable of degrading the native triple helix of collagen. The protein is Collagenolytic protease 35 kDa 2 of Chionoecetes opilio (Atlantic snow crab).